The chain runs to 169 residues: Type II secretion system protein H (169 aa).

A propeptide spans 1 to 29 (leader sequence); sequence MRVARLPLLHPHRAAPVVRRQLRGSSLLE. Met-30 is modified (N-methylmethionine). Residues 32-52 traverse the membrane as a helical segment; it reads LVIALIALAGVLAAAALTGGI.

It belongs to the GSP H family. Type II secretion is composed of four main components: the outer membrane complex, the inner membrane complex, the cytoplasmic secretion ATPase and the periplasm-spanning pseudopilus. Interacts with core component XpsG. Interacts with minor pseudopilins XpsI and XpsJ. Post-translationally, cleaved by prepilin peptidase. Methylated by prepilin peptidase at the amino group of the N-terminal phenylalanine once the leader sequence is cleaved by prepilin peptidase.

The protein resides in the cell inner membrane. Its function is as follows. Component of the type II secretion system required for the energy-dependent secretion of extracellular factors such as proteases and toxins from the periplasm. Part of the pseudopilus tip complex that is critical for the recognition and binding of secretion substrates. This is Type II secretion system protein H (xpsH) from Xanthomonas campestris pv. campestris (strain ATCC 33913 / DSM 3586 / NCPPB 528 / LMG 568 / P 25).